We begin with the raw amino-acid sequence, 303 residues long: MVKYILKRLGLLLLTLFLIVTLTFFMMQVMPGTPFSNPKLTPDQLEILKHAYGLDKPLWQQYFIYVGHMFTGNFGTSFIYTNQPVITMIAQRLPVSMQLGTQALILGTVLGALMGKASARRKNGLLDGIFGFLSVLGISVPSFVIGTLILLYLGFNLNLFPISGWGTFSQTIMPTIALSFAPMAVVTRFVRSEMIESLSSDYILLARAKGLSEKEVVNKHALRNSLIPMLTLIGPMAAGLLTGSVLIEKIFSIPGIGAQFVDSIPAKDFPVIMATTIVYAVILMVFILVTDILTAIVDPRVRL.

The next 7 helical transmembrane spans lie at 9-29 (LGLL…MMQV), 62-82 (YFIY…IYTN), 93-113 (LPVS…LGAL), 129-149 (IFGF…GTLI), 166-186 (GTFS…MAVV), 227-247 (IPML…SVLI), and 269-289 (FPVI…FILV). The ABC transmembrane type-1 domain occupies 93–290 (LPVSMQLGTQ…VILMVFILVT (198 aa)).

It belongs to the binding-protein-dependent transport system permease family. OppBC subfamily. As to quaternary structure, the complex is composed of two ATP-binding proteins (DppD and DppF), two transmembrane proteins (DppB and DppC) and a solute-binding protein (DppA).

It is found in the cell membrane. In terms of biological role, part of the ABC transporter DppABCDF involved in dipeptide transport. Responsible for the translocation of the substrate across the membrane. The chain is Dipeptide transport system permease protein DppB from Lactococcus lactis subsp. cremoris (strain MG1363).